Reading from the N-terminus, the 308-residue chain is Ribonuclease HIII (308 aa).

Residues 92–308 (DNHIGSDEAG…ANTQKAQKLL (217 aa)) enclose the RNase H type-2 domain. A divalent metal cation is bound by residues Asp98, Glu99, and Asp204.

It belongs to the RNase HII family. RnhC subfamily. Requires Mn(2+) as cofactor. Mg(2+) serves as cofactor.

The protein localises to the cytoplasm. It carries out the reaction Endonucleolytic cleavage to 5'-phosphomonoester.. Endonuclease that specifically degrades the RNA of RNA-DNA hybrids. The chain is Ribonuclease HIII from Oceanobacillus iheyensis (strain DSM 14371 / CIP 107618 / JCM 11309 / KCTC 3954 / HTE831).